The sequence spans 1481 residues: ABC-type transporter braE (1481 aa).

The next 6 membrane-spanning stretches (helical) occupy residues Phe27–Ala47, Leu86–Leu106, Ile130–Tyr150, Glu159–Leu179, Leu269–Cys289, and Pro308–Ile328. The ABC transmembrane type-1 1 domain maps to Leu281 to Ala549. Asn367 is a glycosylation site (N-linked (GlcNAc...) asparagine). 3 consecutive transmembrane segments (helical) span residues Glu389–Gly409, Val410–Met430, and Leu491–Phe511. An ABC transporter 1 domain is found at Val594–Lys823. Gly627–Ser634 provides a ligand contact to ATP. N-linked (GlcNAc...) asparagine glycans are attached at residues Asn671 and Asn813. The next 6 helical transmembrane spans lie at Ile887–Leu907, Ala928–Leu948, Ser1001–Ala1021, Tyr1026–Leu1046, Leu1111–Val1131, and Leu1144–Leu1164. Positions Ile887–Thr1166 constitute an ABC transmembrane type-1 2 domain. N-linked (GlcNAc...) asparagine glycans are attached at residues Asn1207 and Asn1232. The ABC transporter 2 domain maps to Leu1224 to Ser1477. Residue Gly1260–Ser1267 coordinates ATP. 2 N-linked (GlcNAc...) asparagine glycosylation sites follow: Asn1330 and Asn1364.

The protein belongs to the ABC transporter superfamily. ABCC family. Conjugate transporter (TC 3.A.1.208) subfamily.

It is found in the membrane. Its function is as follows. ABC-type transporter; part of the gene cluster that mediates the biosynthesis of the brasilane terpene glycosides brasilane D and E. This chain is ABC-type transporter braE, found in Annulohypoxylon truncatum (Hypoxylon truncatum).